A 476-amino-acid polypeptide reads, in one-letter code: mRNA cap guanine-N(7) methyltransferase (476 aa).

Over residues 1 to 14 the composition is skewed to basic and acidic residues; the sequence is MANSAKAEEYEKMS. Residues 1–146 form a disordered region; sequence MANSAKAEEY…KQKNLEEGHS (146 aa). The span at 20–50 shows a compositional bias: polar residues; it reads ASVNSETESSFNINENTTASGTGLSEKTSVC. Phosphoserine occurs at positions 24, 28, and 29. Basic and acidic residues-rich tracts occupy residues 54–68 and 84–118; these read DIARKRKEFEDDLVK and LDPEIVPEEKDCGDAEGNSKKRKRETEDVPKDKSS. Ser-118 carries the phosphoserine modification. Residues 126–128 carry the Nuclear localization signal motif; that stretch reads KRK. Over residues 129–145 the composition is skewed to basic and acidic residues; that stretch reads IALEDVPEKQKNLEEGH. One can recognise an mRNA cap 0 methyltransferase domain in the interval 167 to 475; the sequence is SRIFYLRNFN…IYLVFAFEKQ (309 aa). 176 to 177 serves as a coordination point for mRNA; that stretch reads NN. S-adenosyl-L-methionine is bound by residues Lys-180, Gly-205, Asp-227, Asp-261, Gln-284, and Tyr-289.

The protein belongs to the class I-like SAM-binding methyltransferase superfamily. mRNA cap 0 methyltransferase family. As to quaternary structure, interacts with importin alpha, leading to stimulate both RNA-binding and methyltransferase activity. Interaction with importin alpha and beta is required for its nuclear localization, importin beta dissociating in response to RanGTP, allowing RNMT-importin alpha to bind RNA substrates. Interacts with elongating form of polymerase II and RNGTT. Interacts with RAMAC, this interaction significantly enhances RNA-binding and cap methyltransferase activity. As to expression, widely expressed.

It localises to the nucleus. The catalysed reaction is a 5'-end (5'-triphosphoguanosine)-ribonucleoside in mRNA + S-adenosyl-L-methionine = a 5'-end (N(7)-methyl 5'-triphosphoguanosine)-ribonucleoside in mRNA + S-adenosyl-L-homocysteine. With respect to regulation, methyltransferase activity is activated by RAMAC. Functionally, catalytic subunit of the mRNA-capping methyltransferase RNMT:RAMAC complex that methylates the N7 position of the added guanosine to the 5'-cap structure of mRNAs. Binds RNA containing 5'-terminal GpppC. The chain is mRNA cap guanine-N(7) methyltransferase (RNMT) from Homo sapiens (Human).